Here is a 202-residue protein sequence, read N- to C-terminus: Guanylate kinase (202 aa).

In terms of domain architecture, Guanylate kinase-like spans 18–200 (LKPVVVFGPS…AYKQLEAICL (183 aa)). 25 to 32 (GPSGVGKS) contacts ATP.

Belongs to the guanylate kinase family.

It catalyses the reaction GMP + ATP = GDP + ADP. Essential for recycling GMP and indirectly, cGMP. This Schizosaccharomyces pombe (strain 972 / ATCC 24843) (Fission yeast) protein is Guanylate kinase.